A 1090-amino-acid polypeptide reads, in one-letter code: Leucine--tRNA ligase, cytoplasmic (1090 aa).

At serine 2 the chain carries N-acetylserine. Residues 66–76 (PYMNGVMHAGH) carry the 'HIGH' region motif. Residue threonine 142 is modified to Phosphothreonine. The 'KMSKS' region signature appears at 729 to 733 (KMSKS). Residue lysine 732 coordinates ATP.

The protein belongs to the class-I aminoacyl-tRNA synthetase family.

It is found in the cytoplasm. It catalyses the reaction tRNA(Leu) + L-leucine + ATP = L-leucyl-tRNA(Leu) + AMP + diphosphate. This chain is Leucine--tRNA ligase, cytoplasmic (CDC60), found in Saccharomyces cerevisiae (strain ATCC 204508 / S288c) (Baker's yeast).